Consider the following 203-residue polypeptide: Transcriptional regulator GfcR 2 (203 aa).

It belongs to the purine/pyrimidine phosphoribosyltransferase family. GfcR subfamily.

This Methanosarcina acetivorans (strain ATCC 35395 / DSM 2834 / JCM 12185 / C2A) protein is Transcriptional regulator GfcR 2.